A 249-amino-acid chain; its full sequence is tRNA pseudouridine synthase A (249 aa).

Aspartate 53 acts as the Nucleophile in catalysis. Tyrosine 111 provides a ligand contact to substrate.

The protein belongs to the tRNA pseudouridine synthase TruA family. In terms of assembly, homodimer.

It catalyses the reaction uridine(38/39/40) in tRNA = pseudouridine(38/39/40) in tRNA. Functionally, formation of pseudouridine at positions 38, 39 and 40 in the anticodon stem and loop of transfer RNAs. This is tRNA pseudouridine synthase A from Streptococcus mutans serotype c (strain ATCC 700610 / UA159).